Reading from the N-terminus, the 156-residue chain is uncharacterized protein (156 aa).

Helical transmembrane passes span 7 to 29, 42 to 64, 69 to 88, 98 to 120, and 133 to 155; these read AQIS…SYFL, YFAL…PYLF, AVTG…AITS, AAIW…YPAL, and ALVL…ISRI.

Its subcellular location is the cell membrane. This is an uncharacterized protein from Pasteurella multocida (strain Pm70).